We begin with the raw amino-acid sequence, 257 residues long: NAD kinase (257 aa).

The active-site Proton acceptor is aspartate 46. Residues 46 to 47, histidine 51, 116 to 117, aspartate 146, alanine 154, 157 to 162, and glutamine 218 contribute to the NAD(+) site; these read DG, NE, and TAYNLS.

It belongs to the NAD kinase family. A divalent metal cation is required as a cofactor.

It is found in the cytoplasm. The enzyme catalyses NAD(+) + ATP = ADP + NADP(+) + H(+). Functionally, involved in the regulation of the intracellular balance of NAD and NADP, and is a key enzyme in the biosynthesis of NADP. Catalyzes specifically the phosphorylation on 2'-hydroxyl of the adenosine moiety of NAD to yield NADP. This is NAD kinase from Rhizobium meliloti (strain 1021) (Ensifer meliloti).